We begin with the raw amino-acid sequence, 319 residues long: Cobalamin biosynthesis protein CbiB (319 aa).

A run of 5 helical transmembrane segments spans residues 52–74, 79–101, 155–177, 207–229, and 296–318; these read IGGGVMWVVVVGVTWGVAWGVLA, IHPWFGWSVEVWMIFTTLAGRSL, GIIAPLFFLFLGGAPLAMAYKAV, YLPARLSWLLLGIAAGLCRLSGW, and LMWVASTLALALFIAARCGLSGV.

Belongs to the CobD/CbiB family.

It localises to the cell membrane. It functions in the pathway cofactor biosynthesis; adenosylcobalamin biosynthesis; adenosylcobalamin from cob(II)yrinate a,c-diamide: step 4/7. Converts cobyric acid to cobinamide by the addition of aminopropanol on the F carboxylic group. However, the true cosubstrate could be (R)-1-amino-2-propanol O-2-phosphate, leading to cobinamide phosphate. The polypeptide is Cobalamin biosynthesis protein CbiB (Salmonella typhi).